Here is a 177-residue protein sequence, read N- to C-terminus: Large ribosomal subunit protein uL10 (177 aa).

Belongs to the universal ribosomal protein uL10 family. Part of the ribosomal stalk of the 50S ribosomal subunit. The N-terminus interacts with L11 and the large rRNA to form the base of the stalk. The C-terminus forms an elongated spine to which L12 dimers bind in a sequential fashion forming a multimeric L10(L12)X complex.

Its function is as follows. Forms part of the ribosomal stalk, playing a central role in the interaction of the ribosome with GTP-bound translation factors. The protein is Large ribosomal subunit protein uL10 of Thermoanaerobacter pseudethanolicus (strain ATCC 33223 / 39E) (Clostridium thermohydrosulfuricum).